The chain runs to 805 residues: Endonuclease MutS2 (805 aa).

344-351 (GPNGGGKT) lines the ATP pocket. The interval 705–724 (RSRSEKLQAASEARPSAPPG) is disordered. The region spanning 729–804 (LDVRGLRVEE…GDAVTVVSLR (76 aa)) is the Smr domain.

Belongs to the DNA mismatch repair MutS family. MutS2 subfamily. As to quaternary structure, homodimer. Binds to stalled ribosomes, contacting rRNA.

Its function is as follows. Endonuclease that is involved in the suppression of homologous recombination and thus may have a key role in the control of bacterial genetic diversity. In terms of biological role, acts as a ribosome collision sensor, splitting the ribosome into its 2 subunits. Detects stalled/collided 70S ribosomes which it binds and splits by an ATP-hydrolysis driven conformational change. Acts upstream of the ribosome quality control system (RQC), a ribosome-associated complex that mediates the extraction of incompletely synthesized nascent chains from stalled ribosomes and their subsequent degradation. Probably generates substrates for RQC. In Anaeromyxobacter sp. (strain Fw109-5), this protein is Endonuclease MutS2.